The following is an 84-amino-acid chain: Alpha-like toxin BmK M1 (84 aa).

The first 19 residues, 1-19 (MNYLVMISFALLLMTGVES), serve as a signal peptide directing secretion. Positions 21 to 83 (RDAYIAKPHN…VPIRVPGKCH (63 aa)) constitute an LCN-type CS-alpha/beta domain. Intrachain disulfides connect cysteine 31/cysteine 82, cysteine 35/cysteine 55, cysteine 41/cysteine 65, and cysteine 45/cysteine 67. Arginine 84 is a propeptide (removed by a carboxypeptidase).

This sequence belongs to the long (4 C-C) scorpion toxin superfamily. Sodium channel inhibitor family. Alpha subfamily. In terms of tissue distribution, expressed by the venom gland.

The protein resides in the secreted. Functionally, alpha toxins bind voltage-independently at site-3 of sodium channels (Nav) and inhibit the inactivation of the activated channels thereby blocking neuronal transmission. This toxin is active against both mammals and insects, and is classified as an alpha-like toxin. It is active on Nav1.2/SCN2A (EC(50)=139-252 nM), Nav1.3/SCN3A (EC(50)=565 nM), Nav1.4/SCN4A and Nav1.5/SCN5A (EC(50)=195-500 nM), Nav1.6/SCN8A (EC(50)=214 nM), and drosophila DmNav1 (EC(50)=30 nM). In mNav1.6/SCN8A, the toxin induces a large increase in both transient and persistent currents, which correlates with a prominent reduction in the fast component of inactivating current. In rNav1.2/SCN2A and rNav1.3/SCN3A, toxin-increased currents is much smaller. Moreover, the toxin only accelerates the slow inactivation development and delay recovery of mNav1.6/SCN8A through binding to the channel in the open state. Is 6-fold more toxic than BmK-M2. In vivo, intrahippocampal injection into rat induces epileptiform responses. In addition, intraplantar injection into rat induces spontaneous nociception and hyperalgesia. In Olivierus martensii (Manchurian scorpion), this protein is Alpha-like toxin BmK M1.